Reading from the N-terminus, the 607-residue chain is Elongation factor 4 (607 aa).

The tr-type G domain occupies 11 to 193 (EKIRNFSIIA…QIVEKVPAPQ (183 aa)). GTP contacts are provided by residues 23-28 (DHGKST) and 140-143 (NKID).

This sequence belongs to the TRAFAC class translation factor GTPase superfamily. Classic translation factor GTPase family. LepA subfamily.

It localises to the cell membrane. The catalysed reaction is GTP + H2O = GDP + phosphate + H(+). In terms of biological role, required for accurate and efficient protein synthesis under certain stress conditions. May act as a fidelity factor of the translation reaction, by catalyzing a one-codon backward translocation of tRNAs on improperly translocated ribosomes. Back-translocation proceeds from a post-translocation (POST) complex to a pre-translocation (PRE) complex, thus giving elongation factor G a second chance to translocate the tRNAs correctly. Binds to ribosomes in a GTP-dependent manner. This chain is Elongation factor 4, found in Lactococcus lactis subsp. lactis (strain IL1403) (Streptococcus lactis).